Reading from the N-terminus, the 88-residue chain is Small ribosomal subunit protein bS20 (88 aa).

The segment at M1 to L28 is disordered.

The protein belongs to the bacterial ribosomal protein bS20 family.

Binds directly to 16S ribosomal RNA. In Polynucleobacter necessarius subsp. necessarius (strain STIR1), this protein is Small ribosomal subunit protein bS20.